The primary structure comprises 385 residues: Isocitrate dehydrogenase [NAD] subunit beta, mitochondrial (385 aa).

The transit peptide at 1–34 (MAALSGVRWLTRALVSAGNPGAWRGLSTSAAAHA) directs the protein to the mitochondrion. Lys-199 bears the N6-acetyllysine mark.

It belongs to the isocitrate and isopropylmalate dehydrogenases family. As to quaternary structure, heterooligomer of subunits alpha (IDH3A), beta (IDH3B), and gamma (IDH3G) in the apparent ratio of 2:1:1. The heterodimer containing one IDH3A and one IDH3B subunit and the heterodimer containing one IDH3A and one IDH3G subunit assemble into a heterotetramer (which contains two subunits of IDH3A, one of IDH3B and one of IDH3G) and further into the heterooctamer.

The protein resides in the mitochondrion. The heterotetramer and the heterodimer composed of IDH3A and IDH3G subunits can be allosterically activated by citrate (CIT) or/and ADP, and the two activators can act independently or synergistically. The heterodimer composed of IDH3A and IDH3B subunits cannot be allosterically regulated and the allosteric regulation of the heterotetramer is through the IDH3G subunit and not the IDH3B subunit. The IDH3G subunit contains the allosteric site which consists of a CIT-binding site and an ADP-binding site, and the binding of CIT and ADP causes conformational changes at the allosteric site which are transmitted to the active site in the catalytic subunit (IDH3A) through a cascade of conformational changes at the heterodimer interface, leading to stabilization of the isocitrate-binding at the active site and thus activation of the enzyme. ATP can activate the heterotetramer and the heterodimer composed of IDH3A and IDH3G subunits at low concentrations but inhibits their activities at high concentrations, whereas ATP exhibits only inhibitory effect on the heterodimer composed of IDH3A and IDH3B subunits. In terms of biological role, plays a structural role to facilitate the assembly and ensure the full activity of the enzyme catalyzing the decarboxylation of isocitrate (ICT) into alpha-ketoglutarate. The heterodimer composed of the alpha (IDH3A) and beta (IDH3B) subunits and the heterodimer composed of the alpha (IDH3A) and gamma (IDH3G) subunits, have considerable basal activity but the full activity of the heterotetramer (containing two subunits of IDH3A, one of IDH3B and one of IDH3G) requires the assembly and cooperative function of both heterodimers. In Macaca fascicularis (Crab-eating macaque), this protein is Isocitrate dehydrogenase [NAD] subunit beta, mitochondrial (IDH3B).